A 510-amino-acid polypeptide reads, in one-letter code: Histidine ammonia-lyase (510 aa).

Positions 143 to 145 (ASG) form a cross-link, 5-imidazolinone (Ala-Gly). Ser-144 carries the post-translational modification 2,3-didehydroalanine (Ser).

It belongs to the PAL/histidase family. Post-translationally, contains an active site 4-methylidene-imidazol-5-one (MIO), which is formed autocatalytically by cyclization and dehydration of residues Ala-Ser-Gly.

It is found in the cytoplasm. It carries out the reaction L-histidine = trans-urocanate + NH4(+). The protein operates within amino-acid degradation; L-histidine degradation into L-glutamate; N-formimidoyl-L-glutamate from L-histidine: step 1/3. The protein is Histidine ammonia-lyase of Yersinia pseudotuberculosis serotype I (strain IP32953).